Here is a 403-residue protein sequence, read N- to C-terminus: Flavohemoprotein (403 aa).

One can recognise a Globin domain in the interval 1–138 (MLTQKTKDIV…LADILAGMES (138 aa)). H85 serves as a coordination point for heme b. Residues Y95 and E137 each act as charge relay system in the active site. The tract at residues 149–403 (GGWAGWRRFI…EVFGPDLFAE (255 aa)) is reductase. The 111-residue stretch at 152-262 (AGWRRFIVRE…AAPYGNFYID (111 aa)) folds into the FAD-binding FR-type domain. FAD contacts are provided by residues Y190 and 206 to 209 (RQYS). Residue 275–280 (GVGLTP) participates in NADP(+) binding. 395–398 (VFGP) provides a ligand contact to FAD.

This sequence belongs to the globin family. Two-domain flavohemoproteins subfamily. It in the C-terminal section; belongs to the flavoprotein pyridine nucleotide cytochrome reductase family. It depends on heme b as a cofactor. FAD is required as a cofactor.

It catalyses the reaction 2 nitric oxide + NADPH + 2 O2 = 2 nitrate + NADP(+) + H(+). It carries out the reaction 2 nitric oxide + NADH + 2 O2 = 2 nitrate + NAD(+) + H(+). In terms of biological role, is involved in NO detoxification in an aerobic process, termed nitric oxide dioxygenase (NOD) reaction that utilizes O(2) and NAD(P)H to convert NO to nitrate, which protects the bacterium from various noxious nitrogen compounds. Therefore, plays a central role in the inducible response to nitrosative stress. In Rhizobium meliloti (strain 1021) (Ensifer meliloti), this protein is Flavohemoprotein.